A 155-amino-acid chain; its full sequence is Calmodulin, flagellar (155 aa).

EF-hand domains follow at residues 14 to 49 (EQIA…LGQN), 50 to 85 (PTEA…KMKD), 87 to 122 (DNEE…LGEK), and 123 to 155 (LTDE…MMQK). The Ca(2+) site is built by D27, D29, D31, T33, E38, D63, D65, N67, T69, E74, D100, D102, N104, E111, D136, D138, D140, Q142, and E147.

Belongs to the calmodulin family.

It localises to the cell projection. The protein localises to the cilium. The protein resides in the flagellum. Its function is as follows. Calmodulin mediates the control of a large number of enzymes, ion channels and other proteins by Ca(2+). Among the enzymes to be stimulated by the calmodulin-Ca(2+) complex are a number of protein kinases and phosphatases. This Naegleria gruberi (Amoeba) protein is Calmodulin, flagellar (CAM1).